The sequence spans 267 residues: Hydrolase FUB4 (267 aa).

Residues Ser-93, Asp-183, and His-243 each act as charge relay system in the active site.

This sequence belongs to the AB hydrolase 3 family.

Its pathway is mycotoxin biosynthesis. Functionally, hydrolase; part of the gene cluster that mediates the biosynthesis of fusaric acid, a mycotoxin with low to moderate toxicity to animals and humans, but with high phytotoxic properties. L-aspartate is suggested as fusaric acid amino acid precursor that is activated and further processed to O-acetyl-L-homoserine by cluster enzymes aspartate kinase FUB3 and homoserine O-acetyltransferase FUB5, as well as enzymes of the primary metabolism. The polyketide synthase (PKS) FUB1 generates the triketide trans-2-hexenal which is presumptively released by the hydrolase FUB4 and linked to the NRPS-bound amino acid precursor by NAD(P)-dependent dehydrogenase FUB6. FUB1, FUB4, and the non-canonical NRPS Fub8 may form an enzyme complex. Further processing of the NRPS-bound intermediate might be carried out by FUB6 and the sulfhydrylase FUB7, enabling a spontaneous electrocyclization to close the carbon backbone of fusaric acid. Dihydrofusaric acid is likely to be released via reduction by the thioester reductase (TR) domain of FUB8 whereupon the final oxidation to fusaric acid may (also) be performed by the FMN-dependent dehydrogenase FUB9. This chain is Hydrolase FUB4, found in Gibberella moniliformis (strain M3125 / FGSC 7600) (Maize ear and stalk rot fungus).